The following is a 420-amino-acid chain: Dynein axonemal assembly factor 4 (420 aa).

Residues 3–87 (LQVSDYSWQQ…KEAAMWETLS (85 aa)) enclose the CS domain. The tract at residues 7 to 103 (DYSWQQTKTA…ETMQRIREKS (97 aa)) is mediates interaction with ESR1 and STUB1. TPR repeat units lie at residues 290-323 (PEWLKDKGNKLFATENYLAAINAYNLAIRLNNKM), 324-357 (PLLYLNRAACHLKLKNLHKAIEDSSKALELLMPP), and 366-399 (MKAHVRRGTAFCQLELYVEGLQDYEAALKIDPSN).

As to quaternary structure, interacts with ZMYND10. Interacts with STUB1. Interacts with ESR1 and ESR2. Interacts with DNAAF2. Interacts with CCT3, CCT4, CCT5 and CCT8. Interacts with DNAAF6/PIH1D3.

The protein localises to the nucleus. The protein resides in the cytoplasm. It is found in the cell projection. Its subcellular location is the neuron projection. It localises to the dynein axonemal particle. Functionally, involved in neuronal migration during development of the cerebral neocortex. May regulate the stability and proteasomal degradation of the estrogen receptors that play an important role in neuronal differentiation, survival and plasticity. Axonemal dynein assembly factor required for ciliary motility. This chain is Dynein axonemal assembly factor 4, found in Pongo pygmaeus (Bornean orangutan).